Consider the following 72-residue polypeptide: Large ribosomal subunit protein bL31 (72 aa).

Cys16, Cys18, Cys37, and Cys40 together coordinate Zn(2+).

This sequence belongs to the bacterial ribosomal protein bL31 family. Type A subfamily. In terms of assembly, part of the 50S ribosomal subunit. Requires Zn(2+) as cofactor.

Binds the 23S rRNA. The polypeptide is Large ribosomal subunit protein bL31 (Buchnera aphidicola subsp. Schizaphis graminum (strain Sg)).